The chain runs to 95 residues: Acylphosphatase (95 aa).

The 89-residue stretch at 6–94 (RVRVIVKGIV…EDFTGFSVRY (89 aa)) folds into the Acylphosphatase-like domain. Residues R21 and N39 contribute to the active site.

The protein belongs to the acylphosphatase family.

The enzyme catalyses an acyl phosphate + H2O = a carboxylate + phosphate + H(+). The protein is Acylphosphatase (acyP) of Caldivirga maquilingensis (strain ATCC 700844 / DSM 13496 / JCM 10307 / IC-167).